A 74-amino-acid chain; its full sequence is Molt-inhibiting hormone (74 aa).

Pyrrolidone carboxylic acid is present on Gln-1. Cystine bridges form between Cys-7–Cys-43, Cys-23–Cys-39, and Cys-26–Cys-52. Val-72 carries the valine amide modification.

It is found in the secreted. Its function is as follows. Inhibits Y-organs where molting hormone (ecdysteroid) is secreted. A molting cycle is initiated when MIH secretion diminishes or stops. This is Molt-inhibiting hormone from Procambarus bouvieri (Mexican crayfish).